The sequence spans 71 residues: Small ribosomal subunit protein bS21 (71 aa).

Belongs to the bacterial ribosomal protein bS21 family.

This Buchnera aphidicola subsp. Acyrthosiphon pisum (strain 5A) protein is Small ribosomal subunit protein bS21.